The chain runs to 218 residues: Large ribosomal subunit protein uL3 (218 aa).

The tract at residues 137-157 (GVGASHGAHKNHRKPGSIGGA) is disordered.

Belongs to the universal ribosomal protein uL3 family. In terms of assembly, part of the 50S ribosomal subunit. Forms a cluster with proteins L14 and L19.

In terms of biological role, one of the primary rRNA binding proteins, it binds directly near the 3'-end of the 23S rRNA, where it nucleates assembly of the 50S subunit. In Kocuria rhizophila (strain ATCC 9341 / DSM 348 / NBRC 103217 / DC2201), this protein is Large ribosomal subunit protein uL3.